Consider the following 147-residue polypeptide: 3-dehydroquinate dehydratase (147 aa).

Catalysis depends on Tyr-22, which acts as the Proton acceptor. Substrate-binding residues include Asn-73, His-79, and Asp-86. Residue His-99 is the Proton donor of the active site. Residues 100-101 and Arg-110 each bind substrate; that span reads LS.

Belongs to the type-II 3-dehydroquinase family. Homododecamer.

It catalyses the reaction 3-dehydroquinate = 3-dehydroshikimate + H2O. It functions in the pathway metabolic intermediate biosynthesis; chorismate biosynthesis; chorismate from D-erythrose 4-phosphate and phosphoenolpyruvate: step 3/7. In terms of biological role, catalyzes a trans-dehydration via an enolate intermediate. The sequence is that of 3-dehydroquinate dehydratase from Synechococcus sp. (strain WH7803).